A 1073-amino-acid chain; its full sequence is MLGDGKEGTSTIPGFNQIQFEGFYRFIDQGLIEEVSKFPKIEDIDQEIEFQLFVETYQLVEPLIKERDAVYESLTYSSELYVSAGLIWKTSRNMQEQRIFIGNIPLMNSLGTSIVNGIYRIVINQILQSPGIYYQSELDHNGISVYTGTIISDWGGRLELEIDKKARIWARVSRKQKISILVLSSAMGLNLREILENVCYPEIFLSFLTDKEKKQIGSKENAILEFYQQFSCVGGDPIFSESLCKELQKKFFHQRCELGRIGRRNINWRLNLTIPQNNIFLLPRDILAAADHLIGMKFGMGTLDDMNHLQNKRIRSVADLLQDQFGLALARLENVVKGTICGAIKHKLIPTPQNLVTATPLTTTYESFFGLHPLSQVLDRTNPLTQIVHGRKLSYLGPGGLTGRTANFRIRDIHPSHYGRICPIDTSEGINVGLIGSLAIHARIGDWGSLESPFYELFEKSKKARIRMLFLSPSQDEYYMIAAGNSLALNRGIQEEQAVPARYRQEFLTIAWEEVHLRSIFPFQYFSIGASLIPFIEHNDANRALMSSNMQRQAVPLSRSEKCIVGTGLERQVALDSGVPAIAEQEGKILYTDTKKIILSGYGDNTLGIPLIRYQRSNKNTCMHQKPQVRRGKCIKKGQILADGAATVGGELALGKNILVGYMPWEGYNFEDAVLISECLVYGNIYTSFHIRKYEIQTHVTTQGPERITKEIPHLEGRLLRNLDKNGIVMLGSWVETGDILVGKLTPQVAKESSYAPEDRLLRAILGIQVSTSKETCLKLPIGGRGRVIDVRWVQKKGGSSYNPEKIRVYISQKREIKVGDKVAGRHGNKGIISKILPRQDMPYLQDGRPVDMVFNPLGVPSRMNVGQIFECSLGLAGSLLDRHYRIAPFDERYEQEASRKLVFSELYEASKQTANPWVFEPEYPGKSRIFDGRTGDPFEQPVIIGKPYILKLIHQVDDKIHGRSSGHYALVTQQPLRGRSKQGGQRVGEMEVWALEGFGVAHILQEMLTYKSDHIRARQEVLGTTIIGGTIPKPEDAPESFRLLVRELRSLALDLNHFLVSEKNFQINRKEV.

Belongs to the RNA polymerase beta chain family. In plastids the minimal PEP RNA polymerase catalytic core is composed of four subunits: alpha, beta, beta', and beta''. When a (nuclear-encoded) sigma factor is associated with the core the holoenzyme is formed, which can initiate transcription.

The protein resides in the plastid. It is found in the chloroplast. It carries out the reaction RNA(n) + a ribonucleoside 5'-triphosphate = RNA(n+1) + diphosphate. Functionally, DNA-dependent RNA polymerase catalyzes the transcription of DNA into RNA using the four ribonucleoside triphosphates as substrates. This chain is DNA-directed RNA polymerase subunit beta, found in Aethionema cordifolium (Lebanon stonecress).